The primary structure comprises 201 residues: 3-isopropylmalate dehydratase small subunit (201 aa).

This sequence belongs to the LeuD family. LeuD type 1 subfamily. In terms of assembly, heterodimer of LeuC and LeuD.

It carries out the reaction (2R,3S)-3-isopropylmalate = (2S)-2-isopropylmalate. Its pathway is amino-acid biosynthesis; L-leucine biosynthesis; L-leucine from 3-methyl-2-oxobutanoate: step 2/4. Functionally, catalyzes the isomerization between 2-isopropylmalate and 3-isopropylmalate, via the formation of 2-isopropylmaleate. In Paracoccus denitrificans (strain Pd 1222), this protein is 3-isopropylmalate dehydratase small subunit.